Reading from the N-terminus, the 220-residue chain is uncharacterized protein (220 aa).

This is an uncharacterized protein from Acidianus two-tailed virus (ATV).